A 66-amino-acid chain; its full sequence is Probable cytochrome b-c1 complex subunit 9 (66 aa).

Over 1–20 (MSNALTNIFYKYVARRNSTW) the chain is Mitochondrial matrix. Residues 21–46 (MAGAILGAFVLDSTVSGAVNTFFDSV) form a helical membrane-spanning segment. At 47-66 (NKGKLWKDVYAERVKKGISQ) the chain is on the mitochondrial intermembrane side.

It belongs to the UQCR10/QCR9 family. Component of the ubiquinol-cytochrome c oxidoreductase (cytochrome b-c1 complex, complex III, CIII), a multisubunit enzyme composed of 3 respiratory subunits cytochrome b, cytochrome c1 and Rieske protein, 2 core protein subunits, and additional low-molecular weight protein subunits. The complex exists as an obligatory dimer and forms supercomplexes (SCs) in the inner mitochondrial membrane with cytochrome c oxidase (complex IV, CIV).

The protein localises to the mitochondrion inner membrane. In terms of biological role, component of the ubiquinol-cytochrome c oxidoreductase, a multisubunit transmembrane complex that is part of the mitochondrial electron transport chain which drives oxidative phosphorylation. The respiratory chain contains 3 multisubunit complexes succinate dehydrogenase (complex II, CII), ubiquinol-cytochrome c oxidoreductase (cytochrome b-c1 complex, complex III, CIII) and cytochrome c oxidase (complex IV, CIV), that cooperate to transfer electrons derived from NADH and succinate to molecular oxygen, creating an electrochemical gradient over the inner membrane that drives transmembrane transport and the ATP synthase. The cytochrome b-c1 complex catalyzes electron transfer from ubiquinol to cytochrome c, linking this redox reaction to translocation of protons across the mitochondrial inner membrane, with protons being carried across the membrane as hydrogens on the quinol. In the process called Q cycle, 2 protons are consumed from the matrix, 4 protons are released into the intermembrane space and 2 electrons are passed to cytochrome c. In Dictyostelium discoideum (Social amoeba), this protein is Probable cytochrome b-c1 complex subunit 9.